We begin with the raw amino-acid sequence, 1534 residues long: DNA-directed RNA polymerase subunit beta'' (1534 aa).

Residues cysteine 220, cysteine 296, cysteine 303, and cysteine 306 each coordinate Zn(2+). 2 stretches are compositionally biased toward basic and acidic residues: residues 644–668 and 678–688; these read RTQEEEYRTREEEYRTREEEYRTRE and PENKYRTREGE. 2 disordered regions span residues 644 to 698 and 719 to 800; these read RTQE…EDEY and YRTL…KKEG. Composition is skewed to acidic residues over residues 744-762 and 770-789; these read GEYEILEEDSEEEYGSSED and TLEEDSEEDSEEDSEDEYGS.

It belongs to the RNA polymerase beta' chain family. RpoC2 subfamily. As to quaternary structure, in plastids the minimal PEP RNA polymerase catalytic core is composed of four subunits: alpha, beta, beta', and beta''. When a (nuclear-encoded) sigma factor is associated with the core the holoenzyme is formed, which can initiate transcription. It depends on Zn(2+) as a cofactor.

The protein localises to the plastid. It localises to the chloroplast. It catalyses the reaction RNA(n) + a ribonucleoside 5'-triphosphate = RNA(n+1) + diphosphate. In terms of biological role, DNA-dependent RNA polymerase catalyzes the transcription of DNA into RNA using the four ribonucleoside triphosphates as substrates. The chain is DNA-directed RNA polymerase subunit beta'' from Saccharum hybrid (Sugarcane).